Here is a 444-residue protein sequence, read N- to C-terminus: 23S rRNA (uracil(1939)-C(5))-methyltransferase RlmD (444 aa).

A TRAM domain is found at 5–67 (RNRFDRTPFQ…RHFDEAKTVE (63 aa)). 4 residues coordinate [4Fe-4S] cluster: C80, C86, C89, and C168. Q276, F305, N310, E326, D353, and D374 together coordinate S-adenosyl-L-methionine. C400 acts as the Nucleophile in catalysis.

This sequence belongs to the class I-like SAM-binding methyltransferase superfamily. RNA M5U methyltransferase family. RlmD subfamily.

The catalysed reaction is uridine(1939) in 23S rRNA + S-adenosyl-L-methionine = 5-methyluridine(1939) in 23S rRNA + S-adenosyl-L-homocysteine + H(+). Its function is as follows. Catalyzes the formation of 5-methyl-uridine at position 1939 (m5U1939) in 23S rRNA. The chain is 23S rRNA (uracil(1939)-C(5))-methyltransferase RlmD from Xanthomonas campestris pv. campestris (strain 8004).